Here is a 143-residue protein sequence, read N- to C-terminus: Root meristem growth factor 10 (143 aa).

The first 27 residues, 1–27 (MDMLRSACFYFLLIVFVILSWSLLCDS), serve as a signal peptide directing secretion. A propeptide spanning residues 28-130 (RHLGHMEKKL…SDQEHPGFNL (103 aa)) is cleaved from the precursor. Residue N60 is glycosylated (N-linked (GlcNAc...) asparagine). The segment covering 74–83 (NHGDNGQING) has biased composition (polar residues). The disordered stretch occupies residues 74–143 (NHGDNGQING…QPTTHPPHHN (70 aa)). The Nuclear localization signal signature appears at 92-99 (VKRASDKK). The residue at position 132 (Y132) is a Sulfotyrosine. P140 carries the hydroxyproline modification.

It belongs to the RGF family. As to quaternary structure, binds to LRR receptor-like serine/threonine-protein kinases RGI1, RGI2 and RGI3 to trigger their dimerization with SERK proteins and subsequent signaling. The tyrosine sulfation is critical for the function of the peptide. As to expression, expressed in root tips.

It localises to the secreted. The protein resides in the nucleus. Its function is as follows. Maintains the postembryonic root stem cell niche by regulating the expression levels and patterns of the transcription factor PLETHORA (PLT), mainly at the post-transcriptional level. Promotes root elongation. In Arabidopsis thaliana (Mouse-ear cress), this protein is Root meristem growth factor 10.